A 376-amino-acid polypeptide reads, in one-letter code: 4-hydroxy-3-methylbut-2-en-1-yl diphosphate synthase (flavodoxin) (376 aa).

Positions 272, 275, 307, and 314 each coordinate [4Fe-4S] cluster.

This sequence belongs to the IspG family. [4Fe-4S] cluster serves as cofactor.

It carries out the reaction (2E)-4-hydroxy-3-methylbut-2-enyl diphosphate + oxidized [flavodoxin] + H2O + 2 H(+) = 2-C-methyl-D-erythritol 2,4-cyclic diphosphate + reduced [flavodoxin]. The protein operates within isoprenoid biosynthesis; isopentenyl diphosphate biosynthesis via DXP pathway; isopentenyl diphosphate from 1-deoxy-D-xylulose 5-phosphate: step 5/6. Converts 2C-methyl-D-erythritol 2,4-cyclodiphosphate (ME-2,4cPP) into 1-hydroxy-2-methyl-2-(E)-butenyl 4-diphosphate. The chain is 4-hydroxy-3-methylbut-2-en-1-yl diphosphate synthase (flavodoxin) from Blochmanniella pennsylvanica (strain BPEN).